A 480-amino-acid polypeptide reads, in one-letter code: Acetyl-coenzyme A carboxylase carboxyl transferase subunit beta, chloroplastic (480 aa).

The region spanning 212–480 (LWVQCENCYG…FPLNQINKYK (269 aa)) is the CoA carboxyltransferase N-terminal domain. The Zn(2+) site is built by Cys-216, Cys-219, Cys-235, and Cys-238. Residues 216–238 (CENCYGLNYQKFFRSKMNICERC) form a C4-type zinc finger.

Belongs to the AccD/PCCB family. In terms of assembly, acetyl-CoA carboxylase is a heterohexamer composed of biotin carboxyl carrier protein, biotin carboxylase and 2 subunits each of ACCase subunit alpha and ACCase plastid-coded subunit beta (accD). It depends on Zn(2+) as a cofactor.

It is found in the plastid. The protein resides in the chloroplast stroma. The enzyme catalyses N(6)-carboxybiotinyl-L-lysyl-[protein] + acetyl-CoA = N(6)-biotinyl-L-lysyl-[protein] + malonyl-CoA. Its pathway is lipid metabolism; malonyl-CoA biosynthesis; malonyl-CoA from acetyl-CoA: step 1/1. In terms of biological role, component of the acetyl coenzyme A carboxylase (ACC) complex. Biotin carboxylase (BC) catalyzes the carboxylation of biotin on its carrier protein (BCCP) and then the CO(2) group is transferred by the transcarboxylase to acetyl-CoA to form malonyl-CoA. The polypeptide is Acetyl-coenzyme A carboxylase carboxyl transferase subunit beta, chloroplastic (Illicium oligandrum (Star anise)).